The chain runs to 60 residues: Large ribosomal subunit protein bL32 (60 aa).

Belongs to the bacterial ribosomal protein bL32 family.

This is Large ribosomal subunit protein bL32 from Streptococcus equi subsp. zooepidemicus (strain MGCS10565).